Consider the following 235-residue polypeptide: tRNA (cytidine-2'-O-)-methyltransferase TrmJ (235 aa).

S-adenosyl-L-methionine is bound by residues 77–79 (TSS), Gly111, Ile131, and 138–140 (PVL).

This sequence belongs to the class IV-like SAM-binding methyltransferase superfamily. RNA methyltransferase TrmH family. Homodimer.

The protein resides in the cytoplasm. The enzyme catalyses cytidine(32) in tRNA + S-adenosyl-L-methionine = 2'-O-methylcytidine(32) in tRNA + S-adenosyl-L-homocysteine + H(+). Catalyzes the formation of 2'O-methylated cytidine (Cm32) at position 32 in tRNA. Is specific for cytidine. This Sulfolobus acidocaldarius (strain ATCC 33909 / DSM 639 / JCM 8929 / NBRC 15157 / NCIMB 11770) protein is tRNA (cytidine-2'-O-)-methyltransferase TrmJ.